Reading from the N-terminus, the 381-residue chain is MYG1 exonuclease (381 aa).

The N-terminal 47 residues, 1–47, are a transit peptide targeting the mitochondrion; that stretch reads MGRGFLRGVLTLLPLRSVLQVQHCMLVSEPDLPPKRPRNNLMAPPRI. K267 and K273 each carry N6-acetyllysine.

Belongs to the MYG1 family.

Its subcellular location is the nucleus. It localises to the nucleoplasm. The protein resides in the mitochondrion matrix. The protein localises to the nucleolus. In terms of biological role, 3'-5' RNA exonuclease which cleaves in situ on specific transcripts in both nucleus and mitochondrion. Involved in regulating spatially segregated organellar RNA processing, acts as a coordinator of nucleo-mitochondrial crosstalk. In nucleolus, processes pre-ribosomal RNA involved in ribosome assembly and alters cytoplasmic translation. In mitochondrial matrix, processes 3'-termini of the mito-ribosomal and messenger RNAs and controls translation of mitochondrial proteins. In Rattus norvegicus (Rat), this protein is MYG1 exonuclease.